Consider the following 146-residue polypeptide: Hut operon positive regulatory protein (146 aa).

This sequence belongs to the HutP family. Homohexamer.

Functionally, antiterminator that binds to cis-acting regulatory sequences on the mRNA in the presence of histidine, thereby suppressing transcription termination and activating the hut operon for histidine utilization. The sequence is that of Hut operon positive regulatory protein from Bacillus anthracis (strain CDC 684 / NRRL 3495).